Reading from the N-terminus, the 270-residue chain is 3-methyl-2-oxobutanoate hydroxymethyltransferase (270 aa).

Mg(2+) is bound by residues Asp50 and Asp89. Residues 50-51, Asp89, and Lys118 each bind 3-methyl-2-oxobutanoate; that span reads DS. Glu120 provides a ligand contact to Mg(2+). Residue Glu187 is the Proton acceptor of the active site.

This sequence belongs to the PanB family. Homodecamer; pentamer of dimers. The cofactor is Mg(2+).

The protein localises to the cytoplasm. It catalyses the reaction 3-methyl-2-oxobutanoate + (6R)-5,10-methylene-5,6,7,8-tetrahydrofolate + H2O = 2-dehydropantoate + (6S)-5,6,7,8-tetrahydrofolate. Its pathway is cofactor biosynthesis; (R)-pantothenate biosynthesis; (R)-pantoate from 3-methyl-2-oxobutanoate: step 1/2. Its function is as follows. Catalyzes the reversible reaction in which hydroxymethyl group from 5,10-methylenetetrahydrofolate is transferred onto alpha-ketoisovalerate to form ketopantoate. In Helicobacter pylori (strain ATCC 700392 / 26695) (Campylobacter pylori), this protein is 3-methyl-2-oxobutanoate hydroxymethyltransferase.